The primary structure comprises 1257 residues: Period circadian protein homolog 2 (1257 aa).

Residues 1-59 (MNGYVDFSPSPTSPTQEPGEPQPTQAVLQEDVDMSSGSSGNENCSTGRDSQGSDCDDSG) are disordered. A compositionally biased stretch (low complexity) spans 8-25 (SPSPTSPTQEPGEPQPTQ). A compositionally biased stretch (polar residues) spans 35-53 (SSGSSGNENCSTGRDSQGS). The Nuclear export signal 1 signature appears at 109–118 (LIRTLRELKV). Residues 179–246 (ITSEYIVKNS…FHSYTTPYKL (68 aa)) form the PAS 1 domain. The short motif at 306 to 310 (LCCLL) is the LXXLL element. The PAS 2 domain occupies 319 to 385 (YEAPRIPPEK…MLAIHKKILQ (67 aa)). In terms of domain architecture, PAC spans 393-436 (YSPIRFRTRNGEYITLDTSWSSFINPWSRKISFIIGRHKVRVGP). The Nuclear export signal 2 signature appears at 460 to 469 (LTEQIHRLLM). A disordered region spans residues 471–567 (PVPHSGSSGY…RDSSGASLPK (97 aa)). An important for protein stability region spans residues 478–482 (SGYGS). Polar residues-rich tracts occupy residues 493–504 (MSQTSSSDSNGQ) and 518–528 (SGKSQSKSHFS). A CSNK1E binding domain region spans residues 510-709 (RRSGIFKTSG…DAAGGLSQEK (200 aa)). A phosphoserine mark is found at S525, S528, S531, S538, and S544. Positions 541–555 (EMQSSPPAQVRSVTT) are enriched in polar residues. A Phosphothreonine modification is found at T554. S659, S693, S697, S706, S758, and S763 each carry phosphoserine. Disordered regions lie at residues 678 to 706 (DKKPQPELETVEDVASGPESQDDAAGGLS) and 757 to 833 (RSRA…CPSA). A Nuclear localization signal motif is present at residues 778 to 794 (KKTGKNRKLKSKRVKTR). The segment covering 779-792 (KTGKNRKLKSKRVK) has biased composition (basic residues). The segment covering 821-832 (SPSDTSQSSCPS) has biased composition (low complexity). A Phosphothreonine modification is found at T858. Residues 882–1067 (EFAVQPLPFA…DLCSATGSAL (186 aa)) are interaction with PPARG. Position 939 is a phosphoserine (S939). T964 carries the post-translational modification Phosphothreonine. The residue at position 971 (S971) is a Phosphoserine. The short motif at 983 to 990 (LQLNLLQL) is the Nuclear export signal 3 element. The disordered stretch occupies residues 993–1044 (APESSTGAAGTLGTTGTAASGLDCTSGASRDRQPKAPPTCSEPSDTQNSDAI). The segment covering 996 to 1014 (SSTGAAGTLGTTGTAASGL) has biased composition (low complexity). A compositionally biased stretch (polar residues) spans 1033–1044 (SEPSDTQNSDAI). Positions 1051–1055 (LNLLL) match the LXXLL motif. Residues 1070–1089 (SGASATSDSLGSSSLGCDTS) are compositionally biased toward low complexity. Residues 1070-1108 (SGASATSDSLGSSSLGCDTSRSGAGSSDTSHTSKYFGSI) are disordered. Over residues 1090 to 1108 (RSGAGSSDTSHTSKYFGSI) the composition is skewed to polar residues. Residue S1126 is modified to Phosphoserine. The CRY binding domain stretch occupies residues 1157–1257 (SRDLQAVLKE…LANPRKEAQT (101 aa)). The tract at residues 1226–1257 (EEDSPSLGLCDTSEAKEEESGQLANPRKEAQT) is disordered.

As to quaternary structure, homodimer. Component of the circadian core oscillator, which includes the CRY proteins, CLOCK or NPAS2, BMAL1 or BMAL2, CSNK1D and/or CSNK1E, TIMELESS, and the PER proteins. Interacts with CLOCK-BMAL1 (off DNA). Interacts directly with PER1 and PER3, and through a C-terminal domain, with CRY1 and CRY2. Interacts (via PAS 2 domain) with TIMELESS. Interacts with NFIL3. Different large complexes have been identified with different repressive functions. The core of PER complexes is composed of at least PER1, PER2, PER3, CRY1, CRY2, CSNK1D and/or CSNK1E. The large PER complex involved in the repression of transcriptional termination is composed of at least PER2, CDK9, DDX5, DHX9, NCBP1 and POLR2A (active). The large PER complex involved in the histone deacetylation is composed of at least HDAC1, PER2, SFPQ and SIN3A. The large PER complex involved in the histone methylation is composed of at least PER2, CBX3, TRIM28, SUV39H1 and/or SUV39H2; CBX3 mediates the formation of the complex. Interacts with SETX; the interaction inhibits termination of circadian target genes. Interacts with the nuclear receptors HNF4A, NR1D1, NR4A2, RORA, PPARA, PPARG and THRA; the interaction with at least PPARG is ligand dependent. Interacts with PML. Interacts (phosphorylated) with BTRC and FBXW11; the interactions trigger proteasomal degradation. Interacts with NONO and SFPQ. Interacts with CAVIN3. Interacts with MAGEL2. Interacts with MAP1LC3B. Interacts with HNF4A. In terms of processing, acetylated. Deacetylated by SIRT1, resulting in decreased protein stability. Deacetylated by SIRT6, preventing its degradation by the proteasome, resulting in increased protein stability. Post-translationally, phosphorylated by CSNK1E and CSNK1D. Phosphorylation results in PER2 protein degradation. May be dephosphorylated by PP1. Ubiquitinated, leading to its proteasomal degradation. Ubiquitination may be inhibited by CRY1. As to expression, expressed in all tissues examined including eye, brain, heart, lung, spleen, liver, pancreas and kidney. In the CNS, highly expressed in the SCN, internal granular layer of granular cells of the olfactory bulb, tuberculum olfactorium, piriform cortex, gyrus dentatus of the hippocampus, cerebellum, pars tuberalis/median eminence, and pituitary, and moderately in the tenia tecta, caudate putamen, accumbens nucleus, superior and inferior colliculus and pineal gland.

Its subcellular location is the nucleus. The protein localises to the cytoplasm. It localises to the perinuclear region. In terms of biological role, transcriptional repressor which forms a core component of the circadian clock. The circadian clock, an internal time-keeping system, regulates various physiological processes through the generation of approximately 24 hour circadian rhythms in gene expression, which are translated into rhythms in metabolism and behavior. It is derived from the Latin roots 'circa' (about) and 'diem' (day) and acts as an important regulator of a wide array of physiological functions including metabolism, sleep, body temperature, blood pressure, endocrine, immune, cardiovascular, and renal function. Consists of two major components: the central clock, residing in the suprachiasmatic nucleus (SCN) of the brain, and the peripheral clocks that are present in nearly every tissue and organ system. Both the central and peripheral clocks can be reset by environmental cues, also known as Zeitgebers (German for 'timegivers'). The predominant Zeitgeber for the central clock is light, which is sensed by retina and signals directly to the SCN. The central clock entrains the peripheral clocks through neuronal and hormonal signals, body temperature and feeding-related cues, aligning all clocks with the external light/dark cycle. Circadian rhythms allow an organism to achieve temporal homeostasis with its environment at the molecular level by regulating gene expression to create a peak of protein expression once every 24 hours to control when a particular physiological process is most active with respect to the solar day. Transcription and translation of core clock components (CLOCK, NPAS2, BMAL1, BMAL2, PER1, PER2, PER3, CRY1 and CRY2) plays a critical role in rhythm generation, whereas delays imposed by post-translational modifications (PTMs) are important for determining the period (tau) of the rhythms (tau refers to the period of a rhythm and is the length, in time, of one complete cycle). A diurnal rhythm is synchronized with the day/night cycle, while the ultradian and infradian rhythms have a period shorter and longer than 24 hours, respectively. Disruptions in the circadian rhythms contribute to the pathology of cardiovascular diseases, cancer, metabolic syndrome and aging. A transcription/translation feedback loop (TTFL) forms the core of the molecular circadian clock mechanism. Transcription factors, CLOCK or NPAS2 and BMAL1 or BMAL2, form the positive limb of the feedback loop, act in the form of a heterodimer and activate the transcription of core clock genes and clock-controlled genes (involved in key metabolic processes), harboring E-box elements (5'-CACGTG-3') within their promoters. The core clock genes: PER1/2/3 and CRY1/2 which are transcriptional repressors form the negative limb of the feedback loop and interact with the CLOCK|NPAS2-BMAL1|BMAL2 heterodimer inhibiting its activity and thereby negatively regulating their own expression. This heterodimer also activates nuclear receptors NR1D1/2 and RORA/B/G, which form a second feedback loop and which activate and repress BMAL1 transcription, respectively. PER1 and PER2 proteins transport CRY1 and CRY2 into the nucleus with appropriate circadian timing, but also contribute directly to repression of clock-controlled target genes through interaction with several classes of RNA-binding proteins, helicases and others transcriptional repressors. PER appears to regulate circadian control of transcription by at least three different modes. First, interacts directly with the CLOCK-BMAL1 at the tail end of the nascent transcript peak to recruit complexes containing the SIN3-HDAC that remodel chromatin to repress transcription. Second, brings H3K9 methyltransferases such as SUV39H1 and SUV39H2 to the E-box elements of the circadian target genes, like PER2 itself or PER1. The recruitment of each repressive modifier to the DNA seems to be very precisely temporally orchestrated by the large PER complex, the deacetylases acting before than the methyltransferases. Additionally, large PER complexes are also recruited to the target genes 3' termination site through interactions with RNA-binding proteins and helicases that may play a role in transcription termination to regulate transcription independently of CLOCK-BMAL1 interactions. Recruitment of large PER complexes to the elongating polymerase at PER and CRY termination sites inhibited SETX action, impeding RNA polymerase II release and thereby repressing transcriptional reinitiation. May propagate clock information to metabolic pathways via the interaction with nuclear receptors. Coactivator of PPARA and corepressor of NR1D1, binds rhythmically at the promoter of nuclear receptors target genes like BMAL1 or G6PC1. Directly and specifically represses PPARG proadipogenic activity by blocking PPARG recruitment to target promoters and thereby transcriptional activation. Required for fatty acid and lipid metabolism, is involved as well in the regulation of circulating insulin levels. Plays an important role in the maintenance of cardiovascular functions through the regulation of NO and vasodilatatory prostaglandins production in aortas. Controls circadian glutamate uptake in synaptic vesicles through the regulation of VGLUT1 expression. May also be involved in the regulation of inflammatory processes. Represses the CLOCK-BMAL1 induced transcription of BHLHE40/DEC1 and ATF4. Negatively regulates the formation of the TIMELESS-CRY1 complex by competing with TIMELESS for binding to CRY1. The chain is Period circadian protein homolog 2 from Rattus norvegicus (Rat).